Consider the following 162-residue polypeptide: Probable cytosine deaminase (162 aa).

Positions 8 to 132 constitute a CMP/dCMP-type deaminase domain; sequence EKDLAYLREA…PLYINSRDIL (125 aa). H59 is a Zn(2+) binding site. Residue E61 is the Proton donor of the active site. The Zn(2+) site is built by C87 and C90. D159 provides a ligand contact to substrate.

The protein belongs to the cytidine and deoxycytidylate deaminase family. As to quaternary structure, homodimer. The cofactor is Zn(2+).

The protein localises to the cytoplasm. It localises to the nucleus. It carries out the reaction cytosine + H2O + H(+) = uracil + NH4(+). It participates in pyrimidine metabolism; UMP biosynthesis via salvage pathway; uracil from cytosine: step 1/1. Functionally, catalyzes the hydrolytic deamination of cytosine to uracil or 5-methylcytosine to thymine. Is involved in the pyrimidine salvage pathway, which allows the cell to utilize cytosine for pyrimidine nucleotide synthesis. The sequence is that of Probable cytosine deaminase from Schizosaccharomyces pombe (strain 972 / ATCC 24843) (Fission yeast).